Here is a 354-residue protein sequence, read N- to C-terminus: Uroporphyrinogen decarboxylase (354 aa).

Substrate is bound by residues 27–31, D77, Y154, T209, and H327; that span reads RQAGR.

The protein belongs to the uroporphyrinogen decarboxylase family. As to quaternary structure, homodimer.

It is found in the cytoplasm. It carries out the reaction uroporphyrinogen III + 4 H(+) = coproporphyrinogen III + 4 CO2. Its pathway is porphyrin-containing compound metabolism; protoporphyrin-IX biosynthesis; coproporphyrinogen-III from 5-aminolevulinate: step 4/4. Catalyzes the decarboxylation of four acetate groups of uroporphyrinogen-III to yield coproporphyrinogen-III. This Salmonella paratyphi B (strain ATCC BAA-1250 / SPB7) protein is Uroporphyrinogen decarboxylase.